The sequence spans 467 residues: Cysteine--tRNA ligase (467 aa).

A Zn(2+)-binding site is contributed by C29. Positions 31–41 (PTVYNYVHIGN) match the 'HIGH' region motif. The Zn(2+) site is built by C209, H234, and E238. Positions 267–271 (KMSKS) match the 'KMSKS' region motif. An ATP-binding site is contributed by K270.

The protein belongs to the class-I aminoacyl-tRNA synthetase family. Monomer. The cofactor is Zn(2+).

It is found in the cytoplasm. It catalyses the reaction tRNA(Cys) + L-cysteine + ATP = L-cysteinyl-tRNA(Cys) + AMP + diphosphate. The sequence is that of Cysteine--tRNA ligase from Xylella fastidiosa (strain Temecula1 / ATCC 700964).